The primary structure comprises 298 residues: Protease HtpX homolog (298 aa).

2 helical membrane-spanning segments follow: residues 15–35 (LIMV…GYLF) and 39–59 (PWMG…IMWQ). Histidine 143 is a binding site for Zn(2+). Glutamate 144 is an active-site residue. Residue histidine 147 coordinates Zn(2+). Helical transmembrane passes span 153–173 (ILLS…SGMA) and 197–217 (MIFK…SASL). Glutamate 227 contributes to the Zn(2+) binding site.

Belongs to the peptidase M48B family. It depends on Zn(2+) as a cofactor.

Its subcellular location is the cell membrane. This Lactobacillus helveticus (strain DPC 4571) protein is Protease HtpX homolog.